A 300-amino-acid polypeptide reads, in one-letter code: 33 kDa chaperonin (300 aa).

Intrachain disulfides connect C235/C237 and C269/C272.

It belongs to the HSP33 family. Post-translationally, under oxidizing conditions two disulfide bonds are formed involving the reactive cysteines. Under reducing conditions zinc is bound to the reactive cysteines and the protein is inactive.

Its subcellular location is the cytoplasm. Redox regulated molecular chaperone. Protects both thermally unfolding and oxidatively damaged proteins from irreversible aggregation. Plays an important role in the bacterial defense system toward oxidative stress. The protein is 33 kDa chaperonin of Pseudomonas syringae pv. syringae (strain B728a).